A 71-amino-acid polypeptide reads, in one-letter code: Small ribosomal subunit protein bS18 (71 aa).

It belongs to the bacterial ribosomal protein bS18 family. As to quaternary structure, part of the 30S ribosomal subunit. Forms a tight heterodimer with protein bS6.

Binds as a heterodimer with protein bS6 to the central domain of the 16S rRNA, where it helps stabilize the platform of the 30S subunit. The chain is Small ribosomal subunit protein bS18 from Dichelobacter nodosus (strain VCS1703A).